Here is a 559-residue protein sequence, read N- to C-terminus: Urocanate hydratase (559 aa).

Residues 54 to 55 (GG), glutamine 132, 178 to 180 (GMG), glutamate 198, arginine 203, 244 to 245 (NA), 265 to 269 (QTSAH), 275 to 276 (YL), and tyrosine 324 contribute to the NAD(+) site. Residue cysteine 412 is part of the active site. NAD(+) is bound at residue glycine 494.

This sequence belongs to the urocanase family. The cofactor is NAD(+).

Its subcellular location is the cytoplasm. The catalysed reaction is 4-imidazolone-5-propanoate = trans-urocanate + H2O. It functions in the pathway amino-acid degradation; L-histidine degradation into L-glutamate; N-formimidoyl-L-glutamate from L-histidine: step 2/3. In terms of biological role, catalyzes the conversion of urocanate to 4-imidazolone-5-propionate. This Photorhabdus laumondii subsp. laumondii (strain DSM 15139 / CIP 105565 / TT01) (Photorhabdus luminescens subsp. laumondii) protein is Urocanate hydratase.